Reading from the N-terminus, the 193-residue chain is 3-isopropylmalate dehydratase small subunit (193 aa).

This sequence belongs to the LeuD family. LeuD type 1 subfamily. As to quaternary structure, heterodimer of LeuC and LeuD.

The enzyme catalyses (2R,3S)-3-isopropylmalate = (2S)-2-isopropylmalate. It participates in amino-acid biosynthesis; L-leucine biosynthesis; L-leucine from 3-methyl-2-oxobutanoate: step 2/4. Catalyzes the isomerization between 2-isopropylmalate and 3-isopropylmalate, via the formation of 2-isopropylmaleate. This chain is 3-isopropylmalate dehydratase small subunit, found in Bacillus cereus (strain ATCC 10987 / NRS 248).